Here is a 233-residue protein sequence, read N- to C-terminus: Large ribosomal subunit protein uL1 (233 aa).

This sequence belongs to the universal ribosomal protein uL1 family. Part of the 50S ribosomal subunit.

In terms of biological role, binds directly to 23S rRNA. The L1 stalk is quite mobile in the ribosome, and is involved in E site tRNA release. Functionally, protein L1 is also a translational repressor protein, it controls the translation of the L11 operon by binding to its mRNA. This Shewanella pealeana (strain ATCC 700345 / ANG-SQ1) protein is Large ribosomal subunit protein uL1.